The following is a 67-amino-acid chain: Large ribosomal subunit protein bL32 (67 aa).

Residues 1-19 (MAVPKRKMSRANTRARRSQ) show a composition bias toward basic residues. Positions 1 to 21 (MAVPKRKMSRANTRARRSQWK) are disordered.

This sequence belongs to the bacterial ribosomal protein bL32 family.

This chain is Large ribosomal subunit protein bL32, found in Micrococcus luteus (strain ATCC 4698 / DSM 20030 / JCM 1464 / CCM 169 / CCUG 5858 / IAM 1056 / NBRC 3333 / NCIMB 9278 / NCTC 2665 / VKM Ac-2230) (Micrococcus lysodeikticus).